A 223-amino-acid chain; its full sequence is Coiled-coil domain-containing protein 124 (223 aa).

Residues 1 to 126 (MPKKFQGENT…AEKAKSHLEV (126 aa)) form a disordered region. Residues 15–82 (ARARRAEAKA…LLEEEDSKLK (68 aa)) are a coiled coil. Basic and acidic residues-rich tracts occupy residues 18-74 (RRAE…QRLL) and 99-126 (QIEE…HLEV). 2 positions are modified to phosphoserine: serine 141 and serine 194.

The protein belongs to the CCDC124 family. In terms of assembly, associates with translationally inactive ribosomes in the nonrotated state. Interacts with RASGEF1B.

It localises to the cytoplasm. The protein localises to the cytoskeleton. It is found in the microtubule organizing center. Its subcellular location is the centrosome. The protein resides in the midbody. In terms of biological role, ribosome-binding protein involved in ribosome hibernation: associates with translationally inactive ribosomes and stabilizes the nonrotated conformation of the 80S ribosome, thereby promoting ribosome preservation and storage. Also required for proper progression of late cytokinetic stages. This chain is Coiled-coil domain-containing protein 124 (CCDC124), found in Bos taurus (Bovine).